A 207-amino-acid chain; its full sequence is Urease accessory protein UreE (207 aa).

Residues 171-207 are disordered; the sequence is HHGHAHSHSHSHDHDHDHDHDHQHGPGCAHGHGHDHH. Over residues 180-194 the composition is skewed to basic and acidic residues; that stretch reads HSHDHDHDHDHDHQH.

This sequence belongs to the UreE family.

It is found in the cytoplasm. Involved in urease metallocenter assembly. Binds nickel. Probably functions as a nickel donor during metallocenter assembly. This is Urease accessory protein UreE from Burkholderia lata (strain ATCC 17760 / DSM 23089 / LMG 22485 / NCIMB 9086 / R18194 / 383).